The chain runs to 120 residues: Large ribosomal subunit protein bL12 (120 aa).

It belongs to the bacterial ribosomal protein bL12 family. In terms of assembly, homodimer. Part of the ribosomal stalk of the 50S ribosomal subunit. Forms a multimeric L10(L12)X complex, where L10 forms an elongated spine to which 2 to 4 L12 dimers bind in a sequential fashion. Binds GTP-bound translation factors.

Its function is as follows. Forms part of the ribosomal stalk which helps the ribosome interact with GTP-bound translation factors. Is thus essential for accurate translation. This chain is Large ribosomal subunit protein bL12, found in Aeromonas salmonicida (strain A449).